A 746-amino-acid polypeptide reads, in one-letter code: Polyribonucleotide nucleotidyltransferase (746 aa).

Mg(2+) contacts are provided by Asp490 and Asp496. In terms of domain architecture, KH spans Pro557–Ile619. Positions Gly629–Lys699 constitute an S1 motif domain. Residues Leu701–Asp746 are disordered. Positions Glu706–Asp746 are enriched in basic and acidic residues.

The protein belongs to the polyribonucleotide nucleotidyltransferase family. Mg(2+) serves as cofactor.

The protein localises to the cytoplasm. The catalysed reaction is RNA(n+1) + phosphate = RNA(n) + a ribonucleoside 5'-diphosphate. Its function is as follows. Involved in mRNA degradation. Catalyzes the phosphorolysis of single-stranded polyribonucleotides processively in the 3'- to 5'-direction. The polypeptide is Polyribonucleotide nucleotidyltransferase (Parabacteroides distasonis (strain ATCC 8503 / DSM 20701 / CIP 104284 / JCM 5825 / NCTC 11152)).